Here is a 141-residue protein sequence, read N- to C-terminus: Early nodulin-like protein 19 (141 aa).

The N-terminal stretch at Met-1–Ala-26 is a signal peptide. One can recognise a Phytocyanin domain in the interval Lys-27–Thr-127. N-linked (GlcNAc...) asparagine glycosylation is found at Asn-42 and Asn-88. Cys-80 and Cys-115 are oxidised to a cystine.

Belongs to the early nodulin-like (ENODL) family.

May act as a carbohydrate transporter. The polypeptide is Early nodulin-like protein 19 (Arabidopsis thaliana (Mouse-ear cress)).